The chain runs to 90 residues: Bombyxin D-1 (90 aa).

An N-terminal signal peptide occupies residues 1–18 (MKLLGFFLSWVSVCAIVS). 3 cysteine pairs are disulfide-bonded: C27–C77, C39–C90, and C76–C81. Positions 48–68 (SVAHYAGYGWPLLPSLSEERG) are cleaved as a propeptide — c peptide like.

This sequence belongs to the insulin family. In terms of assembly, heterodimer of a B chain and an A chain linked by two disulfide bonds.

The protein localises to the secreted. Brain peptide responsible for activation of prothoracic glands to produce ecdysone in insects. The sequence is that of Bombyxin D-1 (BBXD1) from Bombyx mori (Silk moth).